A 268-amino-acid chain; its full sequence is MDGSGKGNLDQVKHVLLVLSGKGGVGKSTITTELALAFRHAGKKVGILDVDLCGPSIPRMLSVGKPEVHQCDSGWVPVYADPQQQQLALMSIAFLLEDSDEAVIWRGPKKTALIGQFVSDVAWGELDILLVDTPPGTSDEHLAVLENLRKHRVDGAVLVTTPQAVSTGDVRREITFCKKTNLKILGIVENMSGFVCPHCSECSNIFSKGGGEELAKLTGSAFLGSVPLDPLLTESLEEGRDFLQAFPESSTFTAISHIANTLLNSLNA.

21 to 28 (GKGGVGKS) lines the ATP pocket. The [4Fe-4S] cluster site is built by Cys196 and Cys199.

This sequence belongs to the Mrp/NBP35 ATP-binding proteins family. NUBP2/CFD1 subfamily. Heterotetramer of 2 nubp1 and 2 nubp2 chains. It depends on [4Fe-4S] cluster as a cofactor.

Its subcellular location is the cytoplasm. In terms of biological role, component of the cytosolic iron-sulfur (Fe/S) protein assembly (CIA) machinery. Required for maturation of extramitochondrial Fe-S proteins. The nubp1-nubp2 heterotetramer forms a Fe-S scaffold complex, mediating the de novo assembly of an Fe-S cluster and its transfer to target apoproteins. The chain is Cytosolic Fe-S cluster assembly factor nubp2 (nubp2) from Danio rerio (Zebrafish).